The following is an 89-amino-acid chain: MGGISIWQLLIIAVIVVLLFGTKKLGSIGSDLGASIKGFKKAMSDDEPKQDKTSQDADFTAKTIADKQADTNQEQAKTEDAKRHDKEQV.

A helical transmembrane segment spans residues 1–21 (MGGISIWQLLIIAVIVVLLFG). The tract at residues 65–89 (ADKQADTNQEQAKTEDAKRHDKEQV) is disordered. Residues 76-89 (AKTEDAKRHDKEQV) show a composition bias toward basic and acidic residues.

The protein belongs to the TatA/E family. In terms of assembly, the Tat system comprises two distinct complexes: a TatABC complex, containing multiple copies of TatA, TatB and TatC subunits, and a separate TatA complex, containing only TatA subunits. Substrates initially bind to the TatABC complex, which probably triggers association of the separate TatA complex to form the active translocon.

The protein resides in the cell inner membrane. In terms of biological role, part of the twin-arginine translocation (Tat) system that transports large folded proteins containing a characteristic twin-arginine motif in their signal peptide across membranes. TatA could form the protein-conducting channel of the Tat system. The sequence is that of Sec-independent protein translocase protein TatA from Shigella flexneri.